Consider the following 79-residue polypeptide: MIAGMPALTHKQQQDAVERIQELMSEGMSSGQAIAQVAAEIRQEHQGDNVAVMFDEDDDTVNDSDEEHYFDDGEEEDEQ.

The segment at 54 to 79 (FDEDDDTVNDSDEEHYFDDGEEEDEQ) is disordered.

The protein belongs to the UPF0181 family.

The polypeptide is UPF0181 protein PC1_1931 (Pectobacterium carotovorum subsp. carotovorum (strain PC1)).